A 251-amino-acid polypeptide reads, in one-letter code: Meso-2,3-butanediol dehydrogenase (251 aa).

NAD(+) is bound by residues N15, M17, D36, D60, V61, and N87. The (R)-acetoin site is built by S138, S140, and Y151. Position 138 (S138) interacts with (S)-acetoin. NAD(+) is bound by residues Y151, K155, V184, and T186. Y151 provides a ligand contact to (S)-acetoin. Y151 serves as the catalytic Proton acceptor.

It belongs to the short-chain dehydrogenases/reductases (SDR) family. Homotetramer; dimer of dimers.

The enzyme catalyses (R,S)-butane-2,3-diol + NAD(+) = (R)-acetoin + NADH + H(+). The catalysed reaction is (S,S)-butane-2,3-diol + NAD(+) = (S)-acetoin + NADH + H(+). It catalyses the reaction (S)-acetoin + NAD(+) = diacetyl + NADH + H(+). With respect to regulation, oxidation of meso-2,3-butanediol is enhanced in the presence of Fe(2+). Reduction of diacetyl and (3S/3R)-acetoin is slightly enhanced in the presence of Mg(2+) and Mn(2+). Activity is inhibited by several metal ions, particularly Fe(3+) for reduction of diacetyl and acetoin. Catalyzes the NAD-dependent oxidation of meso-2,3-butanediol to (3R)-acetoin, and of (2S,3S)-2,3-butanediol to (3S)-acetoin, with much lower efficiency. Can also oxidize several primary alcohols such as glycerol, 1-2-pentanediol and 1,2-propanediol, with lower activity. Cannot use (2R,3R)-2,3-butanediol. In the presence of NADH, catalyzes the reduction of (3R)-acetoin to meso-2,3-butanediol, of (3S)-acetoin to (2S,3S)-2,3-butanediol and of diacetyl to (3S)-acetoin. No activity is detected with NADPH/NADP(+). The chain is Meso-2,3-butanediol dehydrogenase from Serratia marcescens.